Here is a 259-residue protein sequence, read N- to C-terminus: Protein unc-50 homolog (259 aa).

Position 1 is an N-acetylmethionine (methionine 1). At 1–82 (MLPSTSLNSS…TKDQWARDDP (82 aa)) the chain is on the cytoplasmic side. Serine 6 is subject to Phosphoserine. The helical transmembrane segment at 83–103 (AFLVLLSIWLCVSTIGFGFVL) threads the bilayer. Residues 104-115 (DMGFFETIKLLL) are Lumenal-facing. Residues 116–136 (WVVFIDCVGVGLLISTLMWFI) form a helical membrane-spanning segment. Residues 137–163 (SNKYLVKRQSRDYDVEWGYAFDVHLNA) are Cytoplasmic-facing. Residues 164-184 (FYPLLVILHFIQLFFINHVIL) form a helical membrane-spanning segment. Topologically, residues 185–187 (TDT) are lumenal. A helical transmembrane segment spans residues 188–208 (FIGYLVGNTLWLIAVGYYIYV). Residues 209–222 (TFLGYSALPFLKNT) are Cytoplasmic-facing. The chain crosses the membrane as a helical span at residues 223–243 (VVLLYPFAPLIVLYGLSLALG). The Lumenal portion of the chain corresponds to 244 to 259 (WNFTHTLCSFYKYRVK).

It belongs to the unc-50 family. In terms of tissue distribution, expressed in brain, kidney and testis, and at lower levels in heart.

The protein resides in the nucleus inner membrane. It localises to the golgi apparatus membrane. Its function is as follows. Involved in the cell surface expression of neuronal nicotinic receptors. Binds RNA. The polypeptide is Protein unc-50 homolog (Unc50) (Rattus norvegicus (Rat)).